We begin with the raw amino-acid sequence, 306 residues long: D-alanine--D-alanine ligase (306 aa).

Active-site residues include Glu-15 and Ser-150. The region spanning 101–303 (KLLWKSLSLR…FDELILKILK (203 aa)) is the ATP-grasp domain. 134-189 (ILKLKFPVVIKPNNAGSSIGITIVNHPDLLIDSINLAFNYSNNIIIEKFLKGTEYT) serves as a coordination point for ATP. Residues Asp-257, Glu-270, and Asn-272 each contribute to the Mg(2+) site. Ser-281 is an active-site residue.

The protein belongs to the D-alanine--D-alanine ligase family. The cofactor is Mg(2+). Requires Mn(2+) as cofactor.

Its subcellular location is the cytoplasm. It catalyses the reaction 2 D-alanine + ATP = D-alanyl-D-alanine + ADP + phosphate + H(+). It functions in the pathway cell wall biogenesis; peptidoglycan biosynthesis. In terms of biological role, cell wall formation. This Buchnera aphidicola subsp. Schizaphis graminum (strain Sg) protein is D-alanine--D-alanine ligase.